Here is a 201-residue protein sequence, read N- to C-terminus: Adenylyl-sulfate kinase (201 aa).

35–42 provides a ligand contact to ATP; it reads GLSGSGKS. Residue serine 109 is the Phosphoserine intermediate of the active site.

Belongs to the APS kinase family.

It carries out the reaction adenosine 5'-phosphosulfate + ATP = 3'-phosphoadenylyl sulfate + ADP + H(+). The protein operates within sulfur metabolism; hydrogen sulfide biosynthesis; sulfite from sulfate: step 2/3. Its function is as follows. Catalyzes the synthesis of activated sulfate. This chain is Adenylyl-sulfate kinase, found in Salmonella paratyphi C (strain RKS4594).